The following is a 545-amino-acid chain: Chaperonin GroEL 4 (545 aa).

ATP-binding positions include 30–33 (TLGP), Lys51, 87–91 (DGTTT), Gly415, and Asp495.

This sequence belongs to the chaperonin (HSP60) family. As to quaternary structure, forms a cylinder of 14 subunits composed of two heptameric rings stacked back-to-back. Interacts with the co-chaperonin GroES.

Its subcellular location is the cytoplasm. The enzyme catalyses ATP + H2O + a folded polypeptide = ADP + phosphate + an unfolded polypeptide.. In terms of biological role, together with its co-chaperonin GroES, plays an essential role in assisting protein folding. The GroEL-GroES system forms a nano-cage that allows encapsulation of the non-native substrate proteins and provides a physical environment optimized to promote and accelerate protein folding. This is Chaperonin GroEL 4 from Rhizobium meliloti (strain 1021) (Ensifer meliloti).